A 1193-amino-acid polypeptide reads, in one-letter code: DNA polymerase (1193 aa).

A disordered region spans residues 1-88 (MALVQTHGSR…PAKKKRGTVV (88 aa)). Over residues 48-68 (PATTASGSRAAPTARRASSPP) the composition is skewed to low complexity.

This sequence belongs to the DNA polymerase type-B family. Heterodimer with the terminal protein; this heterodimer binds to bp 9 to 18 of the genome. Forms a complex with viral pTP, DBP and hosts NFIA and POU2F1/OCT1 for initiation of replication.

The protein resides in the host nucleus. The enzyme catalyses DNA(n) + a 2'-deoxyribonucleoside 5'-triphosphate = DNA(n+1) + diphosphate. Eukaryotic-type DNA polymerase involved in viral genomic replication. DNA synthesis is protein primed, and acts in a strand displacement replication. Assembles in complex with viral pTP, DBP, host NFIA and host POU2F1/OCT1 on viral origin of replication. The polymerase covalently transfers dCMP onto pTP, thereby initiating complementary strand synthesis. In Homo sapiens (Human), this protein is DNA polymerase.